The primary structure comprises 319 residues: Phosphoribosylformylglycinamidine cyclo-ligase (319 aa).

The protein belongs to the AIR synthase family.

It localises to the cytoplasm. The enzyme catalyses 2-formamido-N(1)-(5-O-phospho-beta-D-ribosyl)acetamidine + ATP = 5-amino-1-(5-phospho-beta-D-ribosyl)imidazole + ADP + phosphate + H(+). It participates in purine metabolism; IMP biosynthesis via de novo pathway; 5-amino-1-(5-phospho-D-ribosyl)imidazole from N(2)-formyl-N(1)-(5-phospho-D-ribosyl)glycinamide: step 2/2. This chain is Phosphoribosylformylglycinamidine cyclo-ligase, found in Sulfurisphaera tokodaii (strain DSM 16993 / JCM 10545 / NBRC 100140 / 7) (Sulfolobus tokodaii).